The chain runs to 238 residues: Nicotinamide/nicotinic acid mononucleotide adenylyltransferase (238 aa).

Positions 29 and 30 each coordinate NAD(+). Residues His-37 and Lys-70 each contribute to the ATP site. NAD(+) is bound by residues Thr-107, Gly-136, Asp-138, Trp-149, Arg-168, and Asn-199. 204 to 205 is a binding site for ATP; that stretch reads SR.

The protein belongs to the eukaryotic NMN adenylyltransferase family. The cofactor is a divalent metal cation.

Its subcellular location is the nucleus. It catalyses the reaction beta-nicotinamide D-ribonucleotide + ATP + H(+) = diphosphate + NAD(+). The enzyme catalyses nicotinate beta-D-ribonucleotide + ATP + H(+) = deamido-NAD(+) + diphosphate. It functions in the pathway cofactor biosynthesis; NAD(+) biosynthesis; deamido-NAD(+) from nicotinate D-ribonucleotide: step 1/1. The protein operates within cofactor biosynthesis; NAD(+) biosynthesis; NAD(+) from nicotinamide D-ribonucleotide: step 1/1. Functionally, catalyzes the formation of NAD(+) from nicotinamide mononucleotide (NMN) and ATP. Can also use the deamidated form; nicotinic acid mononucleotide (NaMN) as substrate. The protein is Nicotinamide/nicotinic acid mononucleotide adenylyltransferase (NMNAT) of Arabidopsis thaliana (Mouse-ear cress).